A 147-amino-acid polypeptide reads, in one-letter code: Allograft inflammatory factor 1 (147 aa).

The residue at position 2 (Ser-2) is an N-acetylserine. At Lys-11 the chain carries N6-acetyllysine. Position 39 is a phosphoserine (Ser-39). The EF-hand 1 domain maps to 45 to 80 (SKLEGFKEKYMEFDLNGNGDIDIMSLKRMLEKLGVP). The Ca(2+) site is built by Asp-58, Asn-60, Asn-62, Asp-64, Thr-100, and Asp-105. Residues 81–115 (KTHLELKKLIGEVSSGSGETFSYPDFLRMMLGKRS) form the EF-hand 2; degenerate domain. The disordered stretch occupies residues 128–147 (AREKEKPTGPPAKKAISELP).

Homodimer (Potential). Monomer. Interacts with LCP1. Phosphorylated on serine residues. As to expression, detected in T-lymphocytes and peripheral blood mononuclear cells.

It localises to the cytoplasm. Its subcellular location is the cytoskeleton. The protein resides in the cell projection. It is found in the ruffle membrane. The protein localises to the phagocytic cup. Its function is as follows. Actin-binding protein that enhances membrane ruffling and RAC activation. Enhances the actin-bundling activity of LCP1. Binds calcium. Plays a role in RAC signaling and in phagocytosis. May play a role in macrophage activation and function. Promotes the proliferation of vascular smooth muscle cells and of T-lymphocytes. Enhances lymphocyte migration. Plays a role in vascular inflammation. This Homo sapiens (Human) protein is Allograft inflammatory factor 1 (AIF1).